The sequence spans 356 residues: Heme A synthase (356 aa).

5 helical membrane passes run 23–43 (IAIW…VGGV), 105–125 (FHRL…LYFL), 141–161 (IFLL…SGLV), 173–193 (AHLG…LDLL), and 212–232 (STML…VAGI). A heme-binding site is contributed by histidine 274. The next 3 membrane-spanning stretches (helical) occupy residues 276–296 (LIAW…RAVP), 307–327 (LLLI…LLVV), and 329–349 (LTLA…ALWV). Histidine 335 contacts heme.

Belongs to the COX15/CtaA family. Type 2 subfamily. As to quaternary structure, interacts with CtaB. Requires heme b as cofactor.

The protein resides in the cell membrane. The enzyme catalyses Fe(II)-heme o + 2 A + H2O = Fe(II)-heme a + 2 AH2. The protein operates within porphyrin-containing compound metabolism; heme A biosynthesis; heme A from heme O: step 1/1. Catalyzes the conversion of heme O to heme A by two successive hydroxylations of the methyl group at C8. The first hydroxylation forms heme I, the second hydroxylation results in an unstable dihydroxymethyl group, which spontaneously dehydrates, resulting in the formyl group of heme A. In Nitrosospira multiformis (strain ATCC 25196 / NCIMB 11849 / C 71), this protein is Heme A synthase.